Consider the following 452-residue polypeptide: Probable glycine dehydrogenase (decarboxylating) subunit 1 (452 aa).

The protein belongs to the GcvP family. N-terminal subunit subfamily. In terms of assembly, the glycine cleavage system is composed of four proteins: P, T, L and H. In this organism, the P 'protein' is a heterodimer of two subunits.

It catalyses the reaction N(6)-[(R)-lipoyl]-L-lysyl-[glycine-cleavage complex H protein] + glycine + H(+) = N(6)-[(R)-S(8)-aminomethyldihydrolipoyl]-L-lysyl-[glycine-cleavage complex H protein] + CO2. In terms of biological role, the glycine cleavage system catalyzes the degradation of glycine. The P protein binds the alpha-amino group of glycine through its pyridoxal phosphate cofactor; CO(2) is released and the remaining methylamine moiety is then transferred to the lipoamide cofactor of the H protein. This Nitrosospira multiformis (strain ATCC 25196 / NCIMB 11849 / C 71) protein is Probable glycine dehydrogenase (decarboxylating) subunit 1.